The sequence spans 334 residues: Protein-methionine-sulfoxide reductase catalytic subunit MsrP (334 aa).

The segment at residues 1–44 is a signal peptide (tat-type signal); that stretch reads MKKIRPLTEADVTAESAFFMQRRQVLKALGISAAALSLPSTAQA. Mo-molybdopterin-binding positions include asparagine 88, 91–92, cysteine 146, threonine 181, asparagine 233, arginine 238, and 249–251; these read YE and GIK.

The protein belongs to the MsrP family. In terms of assembly, heterodimer of a catalytic subunit (MsrP) and a heme-binding subunit (MsrQ). Requires Mo-molybdopterin as cofactor. In terms of processing, predicted to be exported by the Tat system. The position of the signal peptide cleavage has not been experimentally proven.

It is found in the periplasm. It catalyses the reaction L-methionyl-[protein] + a quinone + H2O = L-methionyl-(S)-S-oxide-[protein] + a quinol. The enzyme catalyses L-methionyl-[protein] + a quinone + H2O = L-methionyl-(R)-S-oxide-[protein] + a quinol. Part of the MsrPQ system that repairs oxidized periplasmic proteins containing methionine sulfoxide residues (Met-O), using respiratory chain electrons. Thus protects these proteins from oxidative-stress damage caused by reactive species of oxygen and chlorine generated by the host defense mechanisms. MsrPQ is essential for the maintenance of envelope integrity under bleach stress, rescuing a wide series of structurally unrelated periplasmic proteins from methionine oxidation, including the primary periplasmic chaperone SurA and the lipoprotein Pal. The catalytic subunit MsrP is non-stereospecific, being able to reduce both (R-) and (S-) diastereoisomers of methionine sulfoxide. The protein is Protein-methionine-sulfoxide reductase catalytic subunit MsrP of Salmonella agona (strain SL483).